The primary structure comprises 312 residues: UDP-N-acetylenolpyruvoylglucosamine reductase (312 aa).

The FAD-binding PCMH-type domain maps to 30–202; sequence RVGGPAQWLA…VAAQFQLEPG (173 aa). Arg-181 is a catalytic residue. The Proton donor role is filled by Ser-232. Glu-302 is a catalytic residue.

It belongs to the MurB family. It depends on FAD as a cofactor.

Its subcellular location is the cytoplasm. The catalysed reaction is UDP-N-acetyl-alpha-D-muramate + NADP(+) = UDP-N-acetyl-3-O-(1-carboxyvinyl)-alpha-D-glucosamine + NADPH + H(+). The protein operates within cell wall biogenesis; peptidoglycan biosynthesis. Its function is as follows. Cell wall formation. The sequence is that of UDP-N-acetylenolpyruvoylglucosamine reductase from Synechococcus sp. (strain CC9311).